The primary structure comprises 286 residues: Phosphatidylserine decarboxylase proenzyme (286 aa).

Residues aspartate 90, histidine 147, and serine 250 each act as charge relay system; for autoendoproteolytic cleavage activity in the active site. The active-site Schiff-base intermediate with substrate; via pyruvic acid; for decarboxylase activity is serine 250. Position 250 is a pyruvic acid (Ser); by autocatalysis (serine 250).

This sequence belongs to the phosphatidylserine decarboxylase family. PSD-B subfamily. Prokaryotic type I sub-subfamily. In terms of assembly, heterodimer of a large membrane-associated beta subunit and a small pyruvoyl-containing alpha subunit. The cofactor is pyruvate. Is synthesized initially as an inactive proenzyme. Formation of the active enzyme involves a self-maturation process in which the active site pyruvoyl group is generated from an internal serine residue via an autocatalytic post-translational modification. Two non-identical subunits are generated from the proenzyme in this reaction, and the pyruvate is formed at the N-terminus of the alpha chain, which is derived from the carboxyl end of the proenzyme. The autoendoproteolytic cleavage occurs by a canonical serine protease mechanism, in which the side chain hydroxyl group of the serine supplies its oxygen atom to form the C-terminus of the beta chain, while the remainder of the serine residue undergoes an oxidative deamination to produce ammonia and the pyruvoyl prosthetic group on the alpha chain. During this reaction, the Ser that is part of the protease active site of the proenzyme becomes the pyruvoyl prosthetic group, which constitutes an essential element of the active site of the mature decarboxylase.

It localises to the cell membrane. It carries out the reaction a 1,2-diacyl-sn-glycero-3-phospho-L-serine + H(+) = a 1,2-diacyl-sn-glycero-3-phosphoethanolamine + CO2. It participates in phospholipid metabolism; phosphatidylethanolamine biosynthesis; phosphatidylethanolamine from CDP-diacylglycerol: step 2/2. In terms of biological role, catalyzes the formation of phosphatidylethanolamine (PtdEtn) from phosphatidylserine (PtdSer). This Saccharophagus degradans (strain 2-40 / ATCC 43961 / DSM 17024) protein is Phosphatidylserine decarboxylase proenzyme.